The primary structure comprises 401 residues: Argininosuccinate synthase (401 aa).

Residues 10–18 and Ala-37 contribute to the ATP site; that span reads AYSGGLDTS. Tyr-89 contributes to the L-citrulline binding site. ATP is bound at residue Gly-119. Positions 121, 125, and 126 each coordinate L-aspartate. Asn-125 serves as a coordination point for L-citrulline. Positions 129, 178, 187, 263, and 275 each coordinate L-citrulline.

Belongs to the argininosuccinate synthase family. Type 1 subfamily. Homotetramer.

It is found in the cytoplasm. The enzyme catalyses L-citrulline + L-aspartate + ATP = 2-(N(omega)-L-arginino)succinate + AMP + diphosphate + H(+). Its pathway is amino-acid biosynthesis; L-arginine biosynthesis; L-arginine from L-ornithine and carbamoyl phosphate: step 2/3. This is Argininosuccinate synthase from Buchnera aphidicola subsp. Schizaphis graminum (strain Sg).